A 340-amino-acid chain; its full sequence is Uroporphyrinogen decarboxylase (340 aa).

Residues 23-27 (RQAGR), D72, Y147, T202, and H316 contribute to the substrate site.

The protein belongs to the uroporphyrinogen decarboxylase family. Homodimer.

The protein localises to the cytoplasm. The catalysed reaction is uroporphyrinogen III + 4 H(+) = coproporphyrinogen III + 4 CO2. It functions in the pathway porphyrin-containing compound metabolism; protoporphyrin-IX biosynthesis; coproporphyrinogen-III from 5-aminolevulinate: step 4/4. Its function is as follows. Catalyzes the decarboxylation of four acetate groups of uroporphyrinogen-III to yield coproporphyrinogen-III. The chain is Uroporphyrinogen decarboxylase from Geobacter sulfurreducens (strain ATCC 51573 / DSM 12127 / PCA).